A 365-amino-acid chain; its full sequence is IVLLMVVTSNADRICTGITSSNSPHVVKTATQGEVNVTGVIPLTTTPTKSHFANLKGTQTRGKLCPNCLNCTDLDVALGRPKCMGTIPSAKASILHEVKPVTSGCFPIMHDRTKIRQLPNLLRGYENIRLSARNVINAETAPGGPYIVGTSGSCPNVTNGKGFFATMAWAVPKNKNKTARNPLTVEVPYICTKGEDQITVWGFHSDNEIQMVTLYGDSKPQKFTSSANGVTTHYVSQIGGFPNQTEDEGLQQSGRIVVDYMVQKPGKTGTIVYQRGVLLPQKVWCASGRSKVIKGSLPLIGEADCLHEKYGGLNKSKPYYTGEHAKAIGNCPIWVKTPLKLANGTKYRPPAKLLKERGFFGAIAG.

The N-terminal stretch at 1-11 is a signal peptide; the sequence is IVLLMVVTSNA. N-linked (GlcNAc...) asparagine; by host glycosylation is found at asparagine 36, asparagine 70, asparagine 156, asparagine 176, asparagine 243, asparagine 314, and asparagine 343.

This sequence belongs to the influenza viruses hemagglutinin family. As to quaternary structure, homotrimer of disulfide-linked HA1-HA2. Post-translationally, in natural infection, inactive HA is matured into HA1 and HA2 outside the cell by one or more trypsin-like, arginine-specific endoprotease secreted by the bronchial epithelial cells. One identified protease that may be involved in this process is secreted in lungs by club cells. Palmitoylated.

The protein localises to the virion membrane. It is found in the host apical cell membrane. In terms of biological role, binds to sialic acid-containing receptors on the cell surface, bringing about the attachment of the virus particle to the cell. Plays a major role in the determination of host range restriction and virulence. Class I viral fusion protein. Responsible for penetration of the virus into the cell cytoplasm by mediating the fusion of the membrane of the endocytosed virus particle with the endosomal membrane. Low pH in endosomes induce an irreversible conformational change in HA2, releasing the fusion hydrophobic peptide. Several trimers are required to form a competent fusion pore. The chain is Hemagglutinin (HA) from Homo sapiens (Human).